A 116-amino-acid chain; its full sequence is MASYKKERLENDIIRLINRTVIHEIYNETVKTGHVTHVKLSDDLLHVTVYLDCYNREQIDRVVGAFNQAKGVFSRVLAHNLYLAKAVQIHFVKDKAIDNAMRIESIINSLKKSKPN.

This sequence belongs to the RbfA family. In terms of assembly, monomer. Binds 30S ribosomal subunits, but not 50S ribosomal subunits or 70S ribosomes.

It is found in the cytoplasm. Its function is as follows. One of several proteins that assist in the late maturation steps of the functional core of the 30S ribosomal subunit. Associates with free 30S ribosomal subunits (but not with 30S subunits that are part of 70S ribosomes or polysomes). Required for efficient processing of 16S rRNA. May interact with the 5'-terminal helix region of 16S rRNA. The chain is Ribosome-binding factor A from Mycoplasma pneumoniae (strain ATCC 29342 / M129 / Subtype 1) (Mycoplasmoides pneumoniae).